A 512-amino-acid polypeptide reads, in one-letter code: MGATVADLQATNGTAQAQAKHGVSDGRVVAVRGAVVDVAFDGGVLPALNDALVIPIDGAAPILAEVHAHLSDAAVRALALGPTGGLRRGAAVRATGGPIRVPVGDAVLGRLLSVTGEPGDDGAALAADVARRPIHRGAPPLAEQKSATALFATGIKVIDLLAPLAQGGKAAMFGGAGVGKTVLVMELIHAMVERYRGISVFAGIGERSREGHEMLLDMRGSGVLGRTVLVYGQMNEPPGARWRVPLTALAIAEYFRDERAQNVLLLMDNVFRFVQAGAEVSGLLGRLPSRVGYQPTLASEVAALQERIASVEGAAVTAIEAVYVPADDFTDPAVTAIAAHVDSMVVLSRAMAAEGMYPAIDPVASSSILLDPLVVGEAHVEVAIEVRRVIEHYRELQDVIALLGIDELGADDRRIVGRARRLQRFLTQPFAVTEAFTGQAGASVEIADTIAGCRAILRGDCDDWRESSLYMVGTLDDARRKEEAAREADARRDAAAGAASGSAGPQGAQHGR.

ATP is bound at residue 174-181 (GGAGVGKT). A compositionally biased stretch (basic and acidic residues) spans 479-494 (RRKEEAAREADARRDA). Residues 479-512 (RRKEEAAREADARRDAAAGAASGSAGPQGAQHGR) form a disordered region.

It belongs to the ATPase alpha/beta chains family. As to quaternary structure, F-type ATPases have 2 components, CF(1) - the catalytic core - and CF(0) - the membrane proton channel. CF(1) has five subunits: alpha(3), beta(3), gamma(1), delta(1), epsilon(1). CF(0) has three main subunits: a(1), b(2) and c(9-12). The alpha and beta chains form an alternating ring which encloses part of the gamma chain. CF(1) is attached to CF(0) by a central stalk formed by the gamma and epsilon chains, while a peripheral stalk is formed by the delta and b chains.

Its subcellular location is the cell inner membrane. The catalysed reaction is ATP + H2O + 4 H(+)(in) = ADP + phosphate + 5 H(+)(out). Produces ATP from ADP in the presence of a proton gradient across the membrane. The catalytic sites are hosted primarily by the beta subunits. This is ATP synthase subunit beta 2 from Burkholderia thailandensis (strain ATCC 700388 / DSM 13276 / CCUG 48851 / CIP 106301 / E264).